A 501-amino-acid chain; its full sequence is Bifunctional purine biosynthesis protein PurH (501 aa).

An MGS-like domain is found at 1 to 144 (MKKRALISVF…KNFQDVVVIS (144 aa)).

Belongs to the PurH family.

The catalysed reaction is (6R)-10-formyltetrahydrofolate + 5-amino-1-(5-phospho-beta-D-ribosyl)imidazole-4-carboxamide = 5-formamido-1-(5-phospho-D-ribosyl)imidazole-4-carboxamide + (6S)-5,6,7,8-tetrahydrofolate. It carries out the reaction IMP + H2O = 5-formamido-1-(5-phospho-D-ribosyl)imidazole-4-carboxamide. It functions in the pathway purine metabolism; IMP biosynthesis via de novo pathway; 5-formamido-1-(5-phospho-D-ribosyl)imidazole-4-carboxamide from 5-amino-1-(5-phospho-D-ribosyl)imidazole-4-carboxamide (10-formyl THF route): step 1/1. Its pathway is purine metabolism; IMP biosynthesis via de novo pathway; IMP from 5-formamido-1-(5-phospho-D-ribosyl)imidazole-4-carboxamide: step 1/1. This is Bifunctional purine biosynthesis protein PurH from Clostridium botulinum (strain Eklund 17B / Type B).